The chain runs to 120 residues: ATP-dependent Clp protease adapter protein ClpS (120 aa).

The segment at 1-20 is disordered; the sequence is MATKSPVNPKVPLVQEPDRD.

It belongs to the ClpS family. Binds to the N-terminal domain of the chaperone ClpA.

In terms of biological role, involved in the modulation of the specificity of the ClpAP-mediated ATP-dependent protein degradation. This chain is ATP-dependent Clp protease adapter protein ClpS, found in Albidiferax ferrireducens (strain ATCC BAA-621 / DSM 15236 / T118) (Rhodoferax ferrireducens).